A 400-amino-acid chain; its full sequence is Elongation factor Tu (400 aa).

A tr-type G domain is found at 10–210 (KPHCNVGTIG…VDSYIPIPPR (201 aa)). A G1 region spans residues 19–26 (GHVDHGKT). A GTP-binding site is contributed by 19–26 (GHVDHGKT). Thr26 provides a ligand contact to Mg(2+). Positions 60 to 64 (GLTIA) are G2. Residues 81–84 (DCPG) form a G3 region. Residues 81–85 (DCPGH) and 136–139 (NKCD) contribute to the GTP site. A G4 region spans residues 136 to 139 (NKCD). The tract at residues 174 to 176 (SAI) is G5.

Belongs to the TRAFAC class translation factor GTPase superfamily. Classic translation factor GTPase family. EF-Tu/EF-1A subfamily. Monomer.

The protein resides in the cytoplasm. The catalysed reaction is GTP + H2O = GDP + phosphate + H(+). Its function is as follows. GTP hydrolase that promotes the GTP-dependent binding of aminoacyl-tRNA to the A-site of ribosomes during protein biosynthesis. The chain is Elongation factor Tu from Dehalococcoides mccartyi (strain ATCC BAA-2266 / KCTC 15142 / 195) (Dehalococcoides ethenogenes (strain 195)).